Reading from the N-terminus, the 431-residue chain is Putative F-box/FBD/LRR-repeat protein At3g56780 (431 aa).

Residues 6–62 (CSCINELPDDLILKILSFVSTKHVVVTSLLSKKWKSLWTRVPILKYDVRDHTRFERF) form the F-box domain. 8 LRR repeats span residues 56–82 (HTRF…HVEL), 88–113 (NKDI…EIDA), 135–161 (LKGI…HIDH), 162–187 (SSLF…MVIR), 209–236 (LEGL…HVAR), 237–262 (MEDF…TLEE), 264–285 (TSDV…SIIT), and 357–382 (CSER…KLEH). The region spanning 391-423 (RWEPPSLVPECLLSSLEALEWKGYTGRYGDKDL) is the FBD domain.

In Arabidopsis thaliana (Mouse-ear cress), this protein is Putative F-box/FBD/LRR-repeat protein At3g56780.